A 394-amino-acid chain; its full sequence is MSATKTSLYEQLTESSAAALAVKLGLFQSKSTLTCREIGDGNLNYVFHVYDKENKKGLIIKQAIPYAKVVGESWPLTIDRARIESSALIRQGEHVPHLVPAVYYSDTEMAVTVMEDLSHLRISRKGLLEGQHYPNLSAHIGEFLGKTLFYSSDYALDAKVKQQLAKQFTNPELCNITERLVFTEPFLDHETNDFEEELRPYAEKVWNNSRLKEGADELKAIFLNSAETLVHGDLHTGSIFADEHETKVIDPEFAFFGPIGFDIGQFIANLLLNALSRDGDDRQPLYDHTAAVWDTFVKTFSEAWEKDCLPSRRHLLEDTLKNAFEEAVGFAGCELIRRTIGLAHVADLDEITPFDKRIERKKLALDIGAYYIENRKELKHITEVLDQFKLRVKE.

ATP is bound by residues asparagine 44, lysine 61, and 115-117 (EDL). Aspartate 233 contacts substrate. 250-252 (DPE) contacts ATP. Residue arginine 337 participates in substrate binding.

It belongs to the methylthioribose kinase family. As to quaternary structure, homodimer.

It carries out the reaction 5-(methylsulfanyl)-D-ribose + ATP = 5-(methylsulfanyl)-alpha-D-ribose 1-phosphate + ADP + H(+). Its pathway is amino-acid biosynthesis; L-methionine biosynthesis via salvage pathway; S-methyl-5-thio-alpha-D-ribose 1-phosphate from S-methyl-5'-thioadenosine (hydrolase route): step 2/2. In terms of biological role, catalyzes the phosphorylation of methylthioribose into methylthioribose-1-phosphate. The chain is Methylthioribose kinase from Bacillus velezensis (strain DSM 23117 / BGSC 10A6 / LMG 26770 / FZB42) (Bacillus amyloliquefaciens subsp. plantarum).